Consider the following 248-residue polypeptide: 2,3-bisphosphoglycerate-dependent phosphoglycerate mutase (248 aa).

Substrate contacts are provided by residues 10 to 17 (RHGQSEWN), 23 to 24 (TG), Arg62, 89 to 92 (ERHY), Lys100, 116 to 117 (RR), and 183 to 184 (GN). Residue His11 is the Tele-phosphohistidine intermediate of the active site. The active-site Proton donor/acceptor is Glu89.

It belongs to the phosphoglycerate mutase family. BPG-dependent PGAM subfamily.

It catalyses the reaction (2R)-2-phosphoglycerate = (2R)-3-phosphoglycerate. It participates in carbohydrate degradation; glycolysis; pyruvate from D-glyceraldehyde 3-phosphate: step 3/5. In terms of biological role, catalyzes the interconversion of 2-phosphoglycerate and 3-phosphoglycerate. This is 2,3-bisphosphoglycerate-dependent phosphoglycerate mutase from Corynebacterium glutamicum (strain ATCC 13032 / DSM 20300 / JCM 1318 / BCRC 11384 / CCUG 27702 / LMG 3730 / NBRC 12168 / NCIMB 10025 / NRRL B-2784 / 534).